Reading from the N-terminus, the 429-residue chain is Enolase (429 aa).

Q167 is a (2R)-2-phosphoglycerate binding site. The active-site Proton donor is E209. Mg(2+)-binding residues include D246, E289, and D316. (2R)-2-phosphoglycerate-binding residues include K341, R370, S371, and K392. K341 functions as the Proton acceptor in the catalytic mechanism.

This sequence belongs to the enolase family. As to quaternary structure, component of the RNA degradosome, a multiprotein complex involved in RNA processing and mRNA degradation. Requires Mg(2+) as cofactor.

The protein localises to the cytoplasm. Its subcellular location is the secreted. It localises to the cell surface. The enzyme catalyses (2R)-2-phosphoglycerate = phosphoenolpyruvate + H2O. It functions in the pathway carbohydrate degradation; glycolysis; pyruvate from D-glyceraldehyde 3-phosphate: step 4/5. Functionally, catalyzes the reversible conversion of 2-phosphoglycerate (2-PG) into phosphoenolpyruvate (PEP). It is essential for the degradation of carbohydrates via glycolysis. This chain is Enolase, found in Cellvibrio japonicus (strain Ueda107) (Pseudomonas fluorescens subsp. cellulosa).